The sequence spans 202 residues: Nucleoside triphosphate pyrophosphatase (202 aa).

Aspartate 79 functions as the Proton acceptor in the catalytic mechanism.

This sequence belongs to the Maf family. A divalent metal cation is required as a cofactor.

The protein resides in the cytoplasm. It carries out the reaction a ribonucleoside 5'-triphosphate + H2O = a ribonucleoside 5'-phosphate + diphosphate + H(+). The catalysed reaction is a 2'-deoxyribonucleoside 5'-triphosphate + H2O = a 2'-deoxyribonucleoside 5'-phosphate + diphosphate + H(+). Its function is as follows. Nucleoside triphosphate pyrophosphatase. May have a dual role in cell division arrest and in preventing the incorporation of modified nucleotides into cellular nucleic acids. The sequence is that of Nucleoside triphosphate pyrophosphatase from Rhodopseudomonas palustris (strain BisB18).